Reading from the N-terminus, the 142-residue chain is Large ribosomal subunit protein uL13 (142 aa).

It belongs to the universal ribosomal protein uL13 family. In terms of assembly, part of the 50S ribosomal subunit.

Its function is as follows. This protein is one of the early assembly proteins of the 50S ribosomal subunit, although it is not seen to bind rRNA by itself. It is important during the early stages of 50S assembly. This chain is Large ribosomal subunit protein uL13, found in Haemophilus influenzae (strain 86-028NP).